The sequence spans 1574 residues: Synaptojanin-1 (1574 aa).

Residues 119-442 (VRKVLNSGNF…GDSISKIYAG (324 aa)) enclose the SAC domain. Residues 500–899 (GSLRVSEQTL…GPPDGTVLVS (400 aa)) are catalytic. Serine 820 and serine 830 each carry phosphoserine. Positions 894–971 (GTVLVSIKSS…RTITITLKSP (78 aa)) constitute an RRM domain. The segment covering 1029 to 1054 (HLQPSSSSGLGTSPSSSPRTSPCQSP) has biased composition (low complexity). The interval 1029–1327 (HLQPSSSSGL…GVKQEPTLKS (299 aa)) is disordered. Serine 1053 is modified (phosphoserine). Positions 1090 to 1100 (PAAQKESSQTI) are enriched in polar residues. Positions 1105–1127 (PPPPRPVAPPARPAPPQRPPPPS) are enriched in pro residues. Residues serine 1147 and serine 1175 each carry the phosphoserine modification. Arginine 1198 bears the Omega-N-methylarginine mark. Position 1217 is a phosphothreonine (threonine 1217). Positions 1287 to 1310 (SRSSQSLPSDSSPQLQQEQPTGQQ) are enriched in low complexity. 2 positions are modified to phosphoserine: serine 1289 and serine 1350. At threonine 1354 the chain carries Phosphothreonine. Disordered stretches follow at residues 1382–1519 (TMPP…SFDD) and 1532–1574 (LPAR…FTER). Polar residues predominate over residues 1389–1413 (QSKSQESVGSSANPFPSLPTRNPFT). 3 consecutive repeat copies span residues 1401–1403 (NPF), 1410–1412 (NPF), and 1421–1423 (NPF). Positions 1401–1423 (NPFPSLPTRNPFTDRTAAPGNPF) are 3 X 3 AA repeats of N-P-F. Polar residues-rich tracts occupy residues 1424 to 1436 (RVQS…TSWL) and 1472 to 1484 (DLQS…TSNP). Residues 1535 to 1548 (RRPPPPPPPVPLLP) are compositionally biased toward pro residues. The span at 1549-1563 (PGTTSSAGPSTTLSS) shows a compositional bias: low complexity. Serine 1566 carries the phosphoserine modification.

Belongs to the synaptojanin family. This sequence in the central section; belongs to the inositol 1,4,5-trisphosphate 5-phosphatase family. In terms of assembly, interacts with ASH/GRB2. Interacts with PACSIN1, PACSIN2 and PACSIN3. Interacts with AMPH, SH3GL1, SH3GL2 and SH3GL3. Interacts with MYO1E (via SH3 domain). Interacts with BIN1 and DNM1. Interacts with EPS15. In terms of tissue distribution, found in neonatal brain, and in a wide variety of adult non-neuronal tissues. Concentrated at clathrin-coated endocytic intermediates in nerve terminals. Also detected in the lung and heart. Expressed at higher levels than isoform 2 in the testis and liver and is not detected in the skeletal muscle. Expressed predominantly in the neurons, but is also found in all other tissues at much lower levels. Also detected in the lung and heart. Epressed at lower levels than isoform 1 in the testis and liver and is not detected in the skeletal muscle. As to expression, expressed in the brain.

The protein resides in the membrane. It is found in the cytoplasm. It localises to the perinuclear region. The enzyme catalyses a 1,2-diacyl-sn-glycero-3-phospho-(1D-myo-inositol-4,5-bisphosphate) + H2O = a 1,2-diacyl-sn-glycero-3-phospho-(1D-myo-inositol 4-phosphate) + phosphate. Phosphatase that acts on various phosphoinositides, including phosphatidylinositol 4-phosphate, phosphatidylinositol (4,5)-bisphosphate and phosphatidylinositol (3,4,5)-trisphosphate. Has a role in clathrin-mediated endocytosis. Hydrolyzes PIP2 bound to actin regulatory proteins resulting in the rearrangement of actin filaments downstream of tyrosine kinase and ASH/GRB2. The protein is Synaptojanin-1 (Synj1) of Rattus norvegicus (Rat).